We begin with the raw amino-acid sequence, 226 residues long: 7-cyano-7-deazaguanine synthase (226 aa).

8–18 (LSGGLDSTTVL) serves as a coordination point for ATP. Zn(2+) is bound by residues Cys190, Cys198, Cys201, and Cys204.

The protein belongs to the QueC family. Homodimer. Requires Zn(2+) as cofactor.

The catalysed reaction is 7-carboxy-7-deazaguanine + NH4(+) + ATP = 7-cyano-7-deazaguanine + ADP + phosphate + H2O + H(+). The protein operates within purine metabolism; 7-cyano-7-deazaguanine biosynthesis. Functionally, catalyzes the ATP-dependent conversion of 7-carboxy-7-deazaguanine (CDG) to 7-cyano-7-deazaguanine (preQ(0)). The sequence is that of 7-cyano-7-deazaguanine synthase from Clostridium kluyveri (strain ATCC 8527 / DSM 555 / NBRC 12016 / NCIMB 10680 / K1).